The sequence spans 549 residues: Myotubularin-related protein 9 (549 aa).

Methionine 1 carries the N-acetylmethionine modification. Positions alanine 4 to leucine 99 constitute a GRAM domain. The region spanning glycine 123–phenylalanine 498 is the Myotubularin phosphatase domain. Residues leucine 508 to glutamate 542 are a coiled coil. Serine 548 is modified (phosphoserine).

This sequence belongs to the protein-tyrosine phosphatase family. Non-receptor class myotubularin subfamily. In terms of assembly, homodimer. Heterodimer (via C-terminus) with lipid phosphatase MTMR6 (via C-terminus). Heterodimer (via coiled coil domain) with lipid phosphatase MTMR7 (via C-terminus). Heterodimer with lipid phosphatase MTMR8.

The protein resides in the cytoplasm. It localises to the cell projection. It is found in the ruffle membrane. The protein localises to the perinuclear region. Its subcellular location is the endoplasmic reticulum. Functionally, acts as an adapter for myotubularin-related phosphatases. Increases lipid phosphatase MTMR6 catalytic activity, specifically towards phosphatidylinositol 3,5-bisphosphate, and MTMR6 binding affinity for phosphorylated phosphatidylinositols. Positively regulates lipid phosphatase MTMR7 catalytic activity. Increases MTMR8 catalytic activity towards phosphatidylinositol 3-phosphate. The formation of the MTMR6-MTMR9 complex, stabilizes both MTMR6 and MTMR9 protein levels. Stabilizes MTMR8 protein levels. Plays a role in the late stages of macropinocytosis possibly by regulating MTMR6-mediated dephosphorylation of phosphatidylinositol 3-phosphate in membrane ruffles. Negatively regulates autophagy, in part via its association with MTMR8. Negatively regulates DNA damage-induced apoptosis, in part via its association with MTMR6. Does not bind mono-, di- and tri-phosphorylated phosphatidylinositols, phosphatidic acid and phosphatidylserine. The chain is Myotubularin-related protein 9 (MTMR9) from Bos taurus (Bovine).